Consider the following 226-residue polypeptide: Ribosome maturation factor RimM (226 aa).

Residues 144–225 (ADEFYWVDLI…RIVVDWEADY (82 aa)) enclose the PRC barrel domain.

The protein belongs to the RimM family. Binds ribosomal protein uS19.

Its subcellular location is the cytoplasm. Functionally, an accessory protein needed during the final step in the assembly of 30S ribosomal subunit, possibly for assembly of the head region. Essential for efficient processing of 16S rRNA. May be needed both before and after RbfA during the maturation of 16S rRNA. It has affinity for free ribosomal 30S subunits but not for 70S ribosomes. This chain is Ribosome maturation factor RimM, found in Burkholderia ambifaria (strain ATCC BAA-244 / DSM 16087 / CCUG 44356 / LMG 19182 / AMMD) (Burkholderia cepacia (strain AMMD)).